The following is a 362-amino-acid chain: Oxygen-dependent coproporphyrinogen-III oxidase (362 aa).

Positions 12 to 31 (RQENDQSTPQLELPPTDSRD) are disordered. Position 118 (serine 118) interacts with substrate. A divalent metal cation is bound by residues histidine 122 and histidine 132. The Proton donor role is filled by histidine 132. 134-136 (NYR) provides a ligand contact to substrate. Histidine 166 and histidine 196 together coordinate a divalent metal cation. The important for dimerization stretch occupies residues 286-321 (YVEFNLVWDRGTIFGLQTNGRTESILMSLPPLVRWE).

It belongs to the aerobic coproporphyrinogen-III oxidase family. Homodimer. A divalent metal cation is required as a cofactor.

It localises to the cytoplasm. It carries out the reaction coproporphyrinogen III + O2 + 2 H(+) = protoporphyrinogen IX + 2 CO2 + 2 H2O. Its pathway is porphyrin-containing compound metabolism; protoporphyrin-IX biosynthesis; protoporphyrinogen-IX from coproporphyrinogen-III (O2 route): step 1/1. Involved in the heme and chlorophyll biosynthesis. Catalyzes the aerobic oxidative decarboxylation of propionate groups of rings A and B of coproporphyrinogen-III to yield the vinyl groups in protoporphyrinogen-IX. The chain is Oxygen-dependent coproporphyrinogen-III oxidase from Synechococcus sp. (strain CC9902).